The chain runs to 422 residues: Nuclear hormone receptor family member nhr-54 (422 aa).

A DNA-binding region (nuclear receptor) is located at residues 14-92 (SVKCAICYKA…LGMTTENVRT (79 aa)). NR C4-type zinc fingers lie at residues 17 to 37 (CAIC…CRAC) and 53 to 80 (CTRK…FKKC). Positions 161 to 422 (PDDDVIVELN…VFTEPEFFRV (262 aa)) constitute an NR LBD domain.

Belongs to the nuclear hormone receptor family.

It localises to the nucleus. Functionally, orphan nuclear receptor. The protein is Nuclear hormone receptor family member nhr-54 (nhr-54) of Caenorhabditis elegans.